Consider the following 773-residue polypeptide: Disintegrin and metalloproteinase domain-containing protein 11 (773 aa).

An N-terminal signal peptide occupies residues 1–24; the sequence is MRRLRRWAIAALLLLPLLPPPGLG. Positions 25 to 229 are excised as a propeptide; that stretch reads ALGPRGALHW…PNWPKLRRKR (205 aa). Residues 36–82 form a disordered region; that stretch reads SSAHVGSPESPEGSEVTEPSRLVRQSSGGEVRKPQLDTRVRQDPPRG. Basic and acidic residues predominate over residues 65-79; sequence EVRKPQLDTRVRQDP. Residues asparagine 100 and asparagine 167 are each glycosylated (N-linked (GlcNAc...) asparagine). At 230-738 the chain is on the extracellular side; that stretch reads QVRRGHPTVH…ERYKGPSGTN (509 aa). Residues 243 to 442 enclose the Peptidase M12B domain; the sequence is KYVELIVIND…GGGSCLFNKP (200 aa). The segment at 336–773 is required for localization to cerebellar cortex basket cell terminals. Also required for localization of KCNA1, KCNA2, DLG4 and ADAM22 to cerebellar cortex basket cell terminal perisomatic axons and pinceaux; the sequence is GRTFQSTSSG…NIRRGRSGGA (438 aa). Intrachain disulfides connect cysteine 353–cysteine 437, cysteine 396–cysteine 421, cysteine 398–cysteine 405, and cysteine 507–cysteine 527. The region spanning 448 to 535 is the Disintegrin domain; sequence PPECGNGFVE…QCPPNLHKLD (88 aa). 2 N-linked (GlcNAc...) asparagine glycosylation sites follow: asparagine 609 and asparagine 677. Cystine bridges form between cysteine 681–cysteine 696, cysteine 690–cysteine 702, and cysteine 704–cysteine 713. One can recognise an EGF-like domain in the interval 681–713; that stretch reads CPGSGERRICSHHGVCSNEGKCICQPDWTGKDC. A helical membrane pass occupies residues 739–759; the sequence is IIIGSIAGAVLVAAIVLGGTG. The Cytoplasmic portion of the chain corresponds to 760–773; that stretch reads WGFKNIRRGRSGGA.

In terms of assembly, interacts with LGI1 and LGI4. Interacts with KCNA1/KV1.1, KCNA2/KV1.2, DLG4/PSD-95 and ADAM22. In terms of processing, the precursor is cleaved by a furin endopeptidase. Abundantly expressed in cerebellar cortex basket cell terminals and pinceaux, weakly expressed in Purkinje cells (at protein level). Weakly expressed in the heart. Abundantly in expressed in neurons throughout the central nervous system including the telencephalon, diencephalic and brainstem nuclei, cerebellum and spinal cord. Expressed in the peripheral nervous system trigeminal and dorsal root ganglia. Expressed in the ganglion and bipolar cells of the retinae and weakly in the cornea of the eyes. Expressed in the hepatocytes of the parenchyma and hepatic lobules of the liver. Expressed in distinct focal areas in the juxtamedullary cortex of the kidney. Expressed in spermatocytes in the seminiferous tubules of the testes. Expressed in the stratum spinosum of the stratified squamous epithelia of the tongue and esophagus.

Its subcellular location is the presynaptic cell membrane. It localises to the perikaryon. The protein localises to the cell projection. It is found in the axon. Its function is as follows. Probable ligand for integrin in the brain. This is a non catalytic metalloprotease-like protein. Required for localization of the potassium channel subunit proteins KCNA1/KV1.1 and KCNA2/KV1.2 at cerebellar cortex basket cell distal terminals, is thereby involved in ephaptic inhibitory synchronization of Purkinje cell firing and response to stress. Plays a role in spatial learning and motor coordination. Involved in the nociceptive pain response to chemical-derived stimulation. The chain is Disintegrin and metalloproteinase domain-containing protein 11 (Adam11) from Mus musculus (Mouse).